The following is a 185-amino-acid chain: UPF0200 protein Mevan_0592 (185 aa).

8 to 15 (GMPGSGKS) lines the ATP pocket.

It belongs to the UPF0200 family.

This Methanococcus vannielii (strain ATCC 35089 / DSM 1224 / JCM 13029 / OCM 148 / SB) protein is UPF0200 protein Mevan_0592.